The following is a 406-amino-acid chain: NAD(P)H-quinone oxidoreductase subunit H, organellar chromatophore (406 aa).

The protein belongs to the complex I 49 kDa subunit family. NDH is composed of at least 16 different subunits, 5 of which are encoded in the nucleus.

The protein localises to the plastid. It is found in the organellar chromatophore thylakoid membrane. It catalyses the reaction a quinone + NADH + H(+) = a quinol + NAD(+). In terms of biological role, NDH shuttles electrons from NAD(P)H:plastoquinone, via FMN and iron-sulfur (Fe-S) centers, to quinones in the photosynthetic chain and possibly in a chloroplast respiratory chain. The immediate electron acceptor for the enzyme in this species is believed to be plastoquinone. Couples the redox reaction to proton translocation, and thus conserves the redox energy in a proton gradient. This is NAD(P)H-quinone oxidoreductase subunit H, organellar chromatophore from Paulinella chromatophora.